The primary structure comprises 67 residues: DNA-directed RNA polymerase subunit omega (67 aa).

The protein belongs to the RNA polymerase subunit omega family. The RNAP catalytic core consists of 2 alpha, 1 beta, 1 beta' and 1 omega subunit. When a sigma factor is associated with the core the holoenzyme is formed, which can initiate transcription.

It carries out the reaction RNA(n) + a ribonucleoside 5'-triphosphate = RNA(n+1) + diphosphate. Promotes RNA polymerase assembly. Latches the N- and C-terminal regions of the beta' subunit thereby facilitating its interaction with the beta and alpha subunits. The chain is DNA-directed RNA polymerase subunit omega from Delftia acidovorans (strain DSM 14801 / SPH-1).